A 432-amino-acid chain; its full sequence is D-amino acid dehydrogenase (432 aa).

Residue valine 3–tryptophan 17 participates in FAD binding.

Belongs to the DadA oxidoreductase family. FAD serves as cofactor.

It carries out the reaction a D-alpha-amino acid + A + H2O = a 2-oxocarboxylate + AH2 + NH4(+). The protein operates within amino-acid degradation; D-alanine degradation; NH(3) and pyruvate from D-alanine: step 1/1. In terms of biological role, oxidative deamination of D-amino acids. In Cronobacter sakazakii (strain ATCC BAA-894) (Enterobacter sakazakii), this protein is D-amino acid dehydrogenase.